A 277-amino-acid chain; its full sequence is MLKQVIKTVSSSQAPKKYFFKQFCTSTTEKKGRVGLVTLNRPKSLNALSDGLISEINSAVKLFQEDKDVGSIIITGSEKAFAAGADIKEMEKVTLPDAYNNDLLAQWHDLTKIRKPIIAAVNGYALGGGCELAMMCDIIIAGEKAVFGQPEIKLGTIPGCGGTQRLIRAIGKSKAMELVLTGNNLTAVEAEKAGLVSKVVPVEELLTEATKMAEKIASYSQLTVAMAKEAVNASYELTLQEGIRFERRMFHSTFGTHDQKEGMNAFVEKRTPTWHNK.

Residues 1-42 (MLKQVIKTVSSSQAPKKYFFKQFCTSTTEKKGRVGLVTLNRP) constitute a mitochondrion transit peptide. Substrate is bound by residues 85-88 (ADIK) and G128.

Belongs to the enoyl-CoA hydratase/isomerase family. In terms of assembly, homohexamer; dimer of trimers.

The protein localises to the mitochondrion matrix. The catalysed reaction is a (3S)-3-hydroxyacyl-CoA = a (2E)-enoyl-CoA + H2O. The enzyme catalyses a 4-saturated-(3S)-3-hydroxyacyl-CoA = a (3E)-enoyl-CoA + H2O. It catalyses the reaction (3S)-3-hydroxybutanoyl-CoA = (2E)-butenoyl-CoA + H2O. It carries out the reaction 3-hydroxyisovaleryl-CoA = 3-methylbut-2-enoyl-CoA + H2O. The catalysed reaction is 3-hydroxypropanoyl-CoA = acryloyl-CoA + H2O. The enzyme catalyses 3-hydroxybutanoyl-CoA = (2E)-butenoyl-CoA + H2O. It participates in lipid metabolism; fatty acid beta-oxidation. Functionally, straight-chain enoyl-CoA thioesters from C4 up to at least C16 are processed, although with decreasing catalytic rate. The sequence is that of Probable enoyl-CoA hydratase, mitochondrial (echs1) from Dictyostelium discoideum (Social amoeba).